The primary structure comprises 418 residues: Odorant receptor 13a (418 aa).

Over 1 to 38 (MFYSYPYKALSFPIQCVWLKLNGSWPLTESSRPWRSQS) the chain is Cytoplasmic. The helical transmembrane segment at 39 to 59 (LLATAYIVWAWYVIASVGITI) threads the bilayer. The Extracellular portion of the chain corresponds to 60–70 (SYQTAFLLNNL). Asn69 carries an N-linked (GlcNAc...) asparagine glycan. A helical membrane pass occupies residues 71-91 (SDIIITTENCCTTFMGVLNFV). The Cytoplasmic segment spans residues 92–140 (RLIHLRLNQRKFRQLIENFSYEIWIPNSSKNNVAAECRRRMVTFSIMTS). The chain crosses the membrane as a helical span at residues 141-161 (LLACLIIMYCVLPLVEIFFGP). The Extracellular portion of the chain corresponds to 162–195 (AFDAQNKPFPYKMIFPYDAQSSWIRYVMTYIFTS). Residues 196–216 (YAGICVVTTLFAEDTILGFFI) traverse the membrane as a helical segment. The Cytoplasmic segment spans residues 217–273 (TYTCGQFHLLHQRIAGLFAGSNAELAESIQLERLKRIVEKHNNIISFAKRLEDFFNP). A helical membrane pass occupies residues 274 to 294 (ILLANLMISSVLICMVGFQIV). Residues 295–299 (TGKNM) are Extracellular-facing. The helical transmembrane segment at 300–320 (FIGDYVKFIIYISSALSQLYV) threads the bilayer. Over 321-385 (LCENGDALIK…PVRITAFKFS (65 aa)) the chain is Cytoplasmic. The helical transmembrane segment at 386–406 (TLSLQSFTAILSTSISYFTLL) threads the bilayer. Topologically, residues 407–418 (RSVYFDDEKKLD) are extracellular.

Belongs to the insect chemoreceptor superfamily. Heteromeric odorant receptor channel (TC 1.A.69) family. Or1a subfamily. Interacts with Orco. Complexes exist early in the endomembrane system in olfactory sensory neurons (OSNs), coupling these complexes to the conserved ciliary trafficking pathway. In terms of tissue distribution, expressed in olfactory sensory neurons in the antenna.

The protein localises to the cell membrane. Odorant receptor which mediates acceptance or avoidance behavior, depending on its substrates. The odorant receptor repertoire encodes a large collection of odor stimuli that vary widely in identity, intensity, and duration. May form a complex with Orco to form odorant-sensing units, providing sensitive and prolonged odorant signaling and calcium permeability. Involved in the behavioral responses to octanol, nonanol, and pentyl acetate. This Drosophila melanogaster (Fruit fly) protein is Odorant receptor 13a (Or13a).